Consider the following 571-residue polypeptide: Urease subunit alpha (571 aa).

A Urease domain is found at 134-571 (GAIDTHIHFI…LPMAQRYFLF (438 aa)). Residues H139, H141, and K222 each coordinate Ni(2+). K222 bears the N6-carboxylysine mark. Substrate is bound at residue H224. 2 residues coordinate Ni(2+): H251 and H277. H325 acts as the Proton donor in catalysis. D365 provides a ligand contact to Ni(2+).

The protein belongs to the metallo-dependent hydrolases superfamily. Urease alpha subunit family. In terms of assembly, heterotrimer of UreA (gamma), UreB (beta) and UreC (alpha) subunits. Three heterotrimers associate to form the active enzyme. It depends on Ni cation as a cofactor. Carboxylation allows a single lysine to coordinate two nickel ions.

Its subcellular location is the cytoplasm. It catalyses the reaction urea + 2 H2O + H(+) = hydrogencarbonate + 2 NH4(+). It participates in nitrogen metabolism; urea degradation; CO(2) and NH(3) from urea (urease route): step 1/1. This chain is Urease subunit alpha, found in Bordetella parapertussis (strain 12822 / ATCC BAA-587 / NCTC 13253).